Here is a 337-residue protein sequence, read N- to C-terminus: MTQVFQGRSFLAEKDFTREEFEYLIDFAAHLKDLKKRGIPHHYLEGKNIALLFEKTSTRTRAAFTTAAIDLGAHPEYLGANDIQLGKKESTEDTAKVLGRMFDGIEFRGFSQRMVEELAEFSGVPVWNGLTDEWHPTQMLADYLTVKENFGKLEGLTLVYCGDGRNNVANSLLVAGTLLGVNVHIFSPKELFPAEDIVKLAEGYAKASGAHVLVTDNADEAVKGADVLYTDVWVSMGEEDKFEERVKLLKPYQVNMELVKKADNDNLIFLHCLPAFHDTNTVYGKDVAEKFGVEEMEVTDEVFRSKYARHFDQAENRMHTIKAVMAATLGNLFIPKV.

Carbamoyl phosphate-binding positions include 57 to 60, glutamine 84, arginine 108, and 135 to 138; these read STRT and HPTQ. L-ornithine contacts are provided by residues asparagine 167, aspartate 231, and 235–236; that span reads SM. Residues 272–273 and arginine 317 contribute to the carbamoyl phosphate site; that span reads CL.

Belongs to the aspartate/ornithine carbamoyltransferase superfamily. OTCase family.

It is found in the cytoplasm. The enzyme catalyses carbamoyl phosphate + L-ornithine = L-citrulline + phosphate + H(+). It functions in the pathway amino-acid degradation; L-arginine degradation via ADI pathway; carbamoyl phosphate from L-arginine: step 2/2. Its function is as follows. Reversibly catalyzes the transfer of the carbamoyl group from carbamoyl phosphate (CP) to the N(epsilon) atom of ornithine (ORN) to produce L-citrulline. This chain is Ornithine carbamoyltransferase, found in Streptococcus equi subsp. zooepidemicus (strain MGCS10565).